A 361-amino-acid polypeptide reads, in one-letter code: Alanine racemase (361 aa).

The active-site Proton acceptor; specific for D-alanine is the lysine 34. Residue lysine 34 is modified to N6-(pyridoxal phosphate)lysine. Arginine 129 is a binding site for substrate. Tyrosine 256 (proton acceptor; specific for L-alanine) is an active-site residue. Position 304 (methionine 304) interacts with substrate.

It belongs to the alanine racemase family. Pyridoxal 5'-phosphate is required as a cofactor.

The catalysed reaction is L-alanine = D-alanine. Its pathway is amino-acid biosynthesis; D-alanine biosynthesis; D-alanine from L-alanine: step 1/1. Functionally, catalyzes the interconversion of L-alanine and D-alanine. May also act on other amino acids. This chain is Alanine racemase (alr), found in Corynebacterium glutamicum (strain R).